The primary structure comprises 146 residues: Ribonuclease H (146 aa).

In terms of domain architecture, RNase H type-1 spans 1 to 143; sequence MKEIIIYTDG…CDQLARNAIK (143 aa). Mg(2+)-binding residues include aspartate 9, glutamate 47, aspartate 70, and aspartate 135.

It belongs to the RNase H family. In terms of assembly, monomer. Mg(2+) is required as a cofactor.

It is found in the cytoplasm. It carries out the reaction Endonucleolytic cleavage to 5'-phosphomonoester.. Functionally, endonuclease that specifically degrades the RNA of RNA-DNA hybrids. This chain is Ribonuclease H, found in Syntrophomonas wolfei subsp. wolfei (strain DSM 2245B / Goettingen).